The primary structure comprises 209 residues: Methylthioribulose-1-phosphate dehydratase (209 aa).

Zn(2+) contacts are provided by H99 and H101.

Belongs to the aldolase class II family. MtnB subfamily. Zn(2+) serves as cofactor.

It catalyses the reaction 5-(methylsulfanyl)-D-ribulose 1-phosphate = 5-methylsulfanyl-2,3-dioxopentyl phosphate + H2O. Its pathway is amino-acid biosynthesis; L-methionine biosynthesis via salvage pathway; L-methionine from S-methyl-5-thio-alpha-D-ribose 1-phosphate: step 2/6. Catalyzes the dehydration of methylthioribulose-1-phosphate (MTRu-1-P) into 2,3-diketo-5-methylthiopentyl-1-phosphate (DK-MTP-1-P). In Leptospira biflexa serovar Patoc (strain Patoc 1 / Ames), this protein is Methylthioribulose-1-phosphate dehydratase.